The sequence spans 147 residues: Small ribosomal subunit protein uS12 (147 aa).

This sequence belongs to the universal ribosomal protein uS12 family. As to quaternary structure, part of the 30S ribosomal subunit.

In terms of biological role, with S4 and S5 plays an important role in translational accuracy. Located at the interface of the 30S and 50S subunits. The sequence is that of Small ribosomal subunit protein uS12 from Hyperthermus butylicus (strain DSM 5456 / JCM 9403 / PLM1-5).